A 115-amino-acid polypeptide reads, in one-letter code: Chaperone protein PrsD (115 aa).

The protein belongs to the periplasmic pilus chaperone family.

The protein localises to the periplasm. Functionally, mediates assembly of pili by forming soluble multimeric complexes with pili subunits as an intermediate step in the assembly process. In Escherichia coli, this protein is Chaperone protein PrsD (prsD).